The following is a 232-amino-acid chain: DNA repair protein RecO (232 aa).

Belongs to the RecO family.

Involved in DNA repair and RecF pathway recombination. This chain is DNA repair protein RecO, found in Francisella tularensis subsp. novicida (strain U112).